The following is a 164-amino-acid chain: ATP synthase subunit b (164 aa).

Residues 6–26 traverse the membrane as a helical segment; sequence GELVGNFILVTGSVIVLLLLI.

The protein belongs to the ATPase B chain family. In terms of assembly, F-type ATPases have 2 components, F(1) - the catalytic core - and F(0) - the membrane proton channel. F(1) has five subunits: alpha(3), beta(3), gamma(1), delta(1), epsilon(1). F(0) has three main subunits: a(1), b(2) and c(10-14). The alpha and beta chains form an alternating ring which encloses part of the gamma chain. F(1) is attached to F(0) by a central stalk formed by the gamma and epsilon chains, while a peripheral stalk is formed by the delta and b chains.

The protein localises to the cell membrane. Functionally, f(1)F(0) ATP synthase produces ATP from ADP in the presence of a proton or sodium gradient. F-type ATPases consist of two structural domains, F(1) containing the extramembraneous catalytic core and F(0) containing the membrane proton channel, linked together by a central stalk and a peripheral stalk. During catalysis, ATP synthesis in the catalytic domain of F(1) is coupled via a rotary mechanism of the central stalk subunits to proton translocation. Its function is as follows. Component of the F(0) channel, it forms part of the peripheral stalk, linking F(1) to F(0). This chain is ATP synthase subunit b, found in Streptococcus pyogenes serotype M3 (strain ATCC BAA-595 / MGAS315).